The following is a 447-amino-acid chain: Kynurenine 3-monooxygenase (447 aa).

This sequence belongs to the aromatic-ring hydroxylase family. KMO subfamily. FAD is required as a cofactor.

The enzyme catalyses L-kynurenine + NADPH + O2 + H(+) = 3-hydroxy-L-kynurenine + NADP(+) + H2O. It participates in cofactor biosynthesis; NAD(+) biosynthesis; quinolinate from L-kynurenine: step 1/3. In terms of biological role, catalyzes the hydroxylation of L-kynurenine (L-Kyn) to form 3-hydroxy-L-kynurenine (L-3OHKyn). Required for synthesis of quinolinic acid. This Flavobacterium psychrophilum (strain ATCC 49511 / DSM 21280 / CIP 103535 / JIP02/86) protein is Kynurenine 3-monooxygenase.